Consider the following 199-residue polypeptide: Recombination protein RecR (199 aa).

The C4-type zinc-finger motif lies at 57–72 (CSICGNITEDDPCVIC). The Toprim domain occupies 80–176 (STVLVVEEAK…KVTRLAHGLS (97 aa)).

The protein belongs to the RecR family.

May play a role in DNA repair. It seems to be involved in an RecBC-independent recombinational process of DNA repair. It may act with RecF and RecO. The sequence is that of Recombination protein RecR from Lactiplantibacillus plantarum (strain ATCC BAA-793 / NCIMB 8826 / WCFS1) (Lactobacillus plantarum).